A 278-amino-acid chain; its full sequence is Non-homologous end joining protein Ku (278 aa).

Residues 9 to 172 enclose the Ku domain; sequence ISFGLVNIPV…MHFAQELVDV (164 aa). Positions 255–278 are disordered; the sequence is NQTGAGAKKKPAKTAKRGKSRKAA. A compositionally biased stretch (basic residues) spans 261–278; it reads AKKKPAKTAKRGKSRKAA.

The protein belongs to the prokaryotic Ku family. In terms of assembly, homodimer. Interacts with LigD.

Its function is as follows. With LigD forms a non-homologous end joining (NHEJ) DNA repair enzyme, which repairs dsDNA breaks with reduced fidelity. Binds linear dsDNA with 5'- and 3'- overhangs but not closed circular dsDNA nor ssDNA. Recruits and stimulates the ligase activity of LigD. The protein is Non-homologous end joining protein Ku of Opitutus terrae (strain DSM 11246 / JCM 15787 / PB90-1).